Here is a 151-residue protein sequence, read N- to C-terminus: Arginine repressor (151 aa).

The protein belongs to the ArgR family.

Its subcellular location is the cytoplasm. Its pathway is amino-acid biosynthesis; L-arginine biosynthesis [regulation]. In terms of biological role, regulates arginine biosynthesis genes. This is Arginine repressor from Heliobacterium modesticaldum (strain ATCC 51547 / Ice1).